Here is a 447-residue protein sequence, read N- to C-terminus: Cysteine--tRNA ligase (447 aa).

A Zn(2+)-binding site is contributed by Cys28. Residues 30 to 40 carry the 'HIGH' region motif; the sequence is PTVYNYIHVGN. Zn(2+) contacts are provided by Cys211, His236, and Glu240. The 'KMSKS' region signature appears at 268–272; that stretch reads KMSKS. Lys271 provides a ligand contact to ATP.

Belongs to the class-I aminoacyl-tRNA synthetase family. In terms of assembly, monomer. Requires Zn(2+) as cofactor.

It is found in the cytoplasm. It catalyses the reaction tRNA(Cys) + L-cysteine + ATP = L-cysteinyl-tRNA(Cys) + AMP + diphosphate. This is Cysteine--tRNA ligase from Streptococcus mutans serotype c (strain ATCC 700610 / UA159).